A 513-amino-acid chain; its full sequence is Protein disulfide-isomerase (513 aa).

The N-terminal stretch at 1–23 is a signal peptide; the sequence is MAIRSKAWISLLLALAVALSARA. The 122-residue stretch at 24–145 folds into the Thioredoxin 1 domain; the sequence is EEEPAAAAEG…IVDYLKKQVG (122 aa). Residues cysteine 63 and cysteine 66 each act as nucleophile in the active site. Cysteine 63 and cysteine 66 are joined by a disulfide. Residue asparagine 279 is glycosylated (N-linked (GlcNAc...) asparagine). One can recognise a Thioredoxin 2 domain in the interval 366-485; that stretch reads FRNSEPIPEV…IVDFIKKSKE (120 aa). Residues cysteine 408 and cysteine 411 each act as nucleophile in the active site. Cysteine 408 and cysteine 411 are oxidised to a cystine. Residues 485–513 are disordered; the sequence is ETAAPHHHHHPGATGIREGSRAEPVKDEL. Positions 502–513 are enriched in basic and acidic residues; sequence EGSRAEPVKDEL. The Prevents secretion from ER motif lies at 510-513; it reads KDEL.

The protein belongs to the protein disulfide isomerase family.

The protein resides in the endoplasmic reticulum lumen. The enzyme catalyses Catalyzes the rearrangement of -S-S- bonds in proteins.. Participates in the folding of proteins containing disulfide bonds, may be involved in glycosylation, prolyl hydroxylation and triglyceride transfer. The chain is Protein disulfide-isomerase (PDI) from Zea mays (Maize).